A 198-amino-acid chain; its full sequence is Peptidyl-tRNA hydrolase (198 aa).

Tyr-15 contributes to the tRNA binding site. Catalysis depends on His-20, which acts as the Proton acceptor. 3 residues coordinate tRNA: Phe-66, Asn-68, and Asn-114.

Belongs to the PTH family. As to quaternary structure, monomer.

The protein resides in the cytoplasm. It catalyses the reaction an N-acyl-L-alpha-aminoacyl-tRNA + H2O = an N-acyl-L-amino acid + a tRNA + H(+). Its function is as follows. Hydrolyzes ribosome-free peptidyl-tRNAs (with 1 or more amino acids incorporated), which drop off the ribosome during protein synthesis, or as a result of ribosome stalling. In terms of biological role, catalyzes the release of premature peptidyl moieties from peptidyl-tRNA molecules trapped in stalled 50S ribosomal subunits, and thus maintains levels of free tRNAs and 50S ribosomes. The chain is Peptidyl-tRNA hydrolase from Cupriavidus metallidurans (strain ATCC 43123 / DSM 2839 / NBRC 102507 / CH34) (Ralstonia metallidurans).